A 147-amino-acid chain; its full sequence is Ribonuclease P protein component 2 (147 aa).

Belongs to the eukaryotic/archaeal RNase P protein component 2 family. Consists of a catalytic RNA component and at least 4-5 protein subunits.

It localises to the cytoplasm. It catalyses the reaction Endonucleolytic cleavage of RNA, removing 5'-extranucleotides from tRNA precursor.. Its function is as follows. Part of ribonuclease P, a protein complex that generates mature tRNA molecules by cleaving their 5'-ends. The polypeptide is Ribonuclease P protein component 2 (Methanocorpusculum labreanum (strain ATCC 43576 / DSM 4855 / Z)).